Consider the following 285-residue polypeptide: Bifunctional protein FolD 2 (285 aa).

NADP(+) contacts are provided by residues 164 to 166 (GRS), Ser189, and Val230.

This sequence belongs to the tetrahydrofolate dehydrogenase/cyclohydrolase family. In terms of assembly, homodimer.

The enzyme catalyses (6R)-5,10-methylene-5,6,7,8-tetrahydrofolate + NADP(+) = (6R)-5,10-methenyltetrahydrofolate + NADPH. It catalyses the reaction (6R)-5,10-methenyltetrahydrofolate + H2O = (6R)-10-formyltetrahydrofolate + H(+). The protein operates within one-carbon metabolism; tetrahydrofolate interconversion. In terms of biological role, catalyzes the oxidation of 5,10-methylenetetrahydrofolate to 5,10-methenyltetrahydrofolate and then the hydrolysis of 5,10-methenyltetrahydrofolate to 10-formyltetrahydrofolate. This Geobacter sulfurreducens (strain ATCC 51573 / DSM 12127 / PCA) protein is Bifunctional protein FolD 2.